Reading from the N-terminus, the 309-residue chain is Olfactory receptor 5B2 (309 aa).

Residues 1-23 (MENCTEVTKFILLGLTSVPELQI) lie on the Extracellular side of the membrane. N-linked (GlcNAc...) asparagine glycosylation is present at N3. A helical transmembrane segment spans residues 24–47 (PLFILFTFIYLLTLCGNLGMMLLI). Residues 48–55 (LMDSCLHT) lie on the Cytoplasmic side of the membrane. A helical transmembrane segment spans residues 56–77 (PMYFFLSNLSLVDFGYSSAVTP). Residues 78–98 (KVMAGFLRGDKVISYNACAVQ) are Extracellular-facing. Residues C95 and C187 are joined by a disulfide bond. Residues 99–118 (MFFFVALATVENYLLASMAY) traverse the membrane as a helical segment. Topologically, residues 119–137 (DRYAAVCKPLHYTTTMTAS) are cytoplasmic. The helical transmembrane segment at 138-156 (VGACLALGSYVCGFLNASF) threads the bilayer. At 157–193 (HIGGIFSLSFCKSNLVHHFFCDVPAVMALSCSDKHTS) the chain is on the extracellular side. The helical transmembrane segment at 194-217 (EVILVFMSSFNIFFVLLVIFISYL) threads the bilayer. Residues 218–234 (FIFITILKMHSAKGHQK) are Cytoplasmic-facing. A helical transmembrane segment spans residues 235 to 257 (ALSTCASHFTAVSVFYGTVIFIY). Residues 258 to 270 (LQPSSSHSMDTDK) are Extracellular-facing. The chain crosses the membrane as a helical span at residues 271-290 (MASVFYAMIIPMLNPVVYSL). The Cytoplasmic segment spans residues 291–309 (RNREVQNAFKKVLRRQKFL).

Belongs to the G-protein coupled receptor 1 family.

It localises to the cell membrane. In terms of biological role, odorant receptor. The protein is Olfactory receptor 5B2 (OR5B2) of Homo sapiens (Human).